Here is a 60-residue protein sequence, read N- to C-terminus: Homeobox protein engrailed-like A (60 aa).

A DNA-binding region (homeobox) is located at residues 1–41 (ADQLARLRAEFQANRYLTEERRQNLARELSLNEAQIKIWFQ).

This sequence belongs to the engrailed homeobox family.

It is found in the nucleus. In Myxine glutinosa (Atlantic hagfish), this protein is Homeobox protein engrailed-like A.